The sequence spans 500 residues: NAD(P)H-quinone oxidoreductase chain 4, chloroplastic (500 aa).

15 helical membrane passes run 3 to 23 (FFPW…IILF), 37 to 57 (ICIC…HFQL), 87 to 107 (IGPI…AWPV), 113 to 130 (LFHF…GLFA), 134 to 154 (LLLF…LLSM), 167 to 187 (FILY…GVGL), 208 to 228 (ALEI…SPII), 242 to 262 (HYST…YGLI), 272 to 292 (AHSI…IYAA), 305 to 325 (IAYS…SIND), 330 to 350 (GAIL…FLAG), 364 to 384 (MGGI…FSMA), 386 to 406 (LALP…GIIT), 411 to 431 (LLIS…LTPI), and 462 to 482 (LFVS…PDFV).

This sequence belongs to the complex I subunit 4 family.

Its subcellular location is the plastid. It is found in the chloroplast thylakoid membrane. It catalyses the reaction a plastoquinone + NADH + (n+1) H(+)(in) = a plastoquinol + NAD(+) + n H(+)(out). The catalysed reaction is a plastoquinone + NADPH + (n+1) H(+)(in) = a plastoquinol + NADP(+) + n H(+)(out). This Daucus carota (Wild carrot) protein is NAD(P)H-quinone oxidoreductase chain 4, chloroplastic.